Reading from the N-terminus, the 157-residue chain is MPQIIEAGLSAQGKKFGIIAARFNDFITERLVGGALDALTRSGAADGDITLLKVPGAFEIPLAAKKMAMTGKFDAIICLGAVIRGATNHYDYVCAEVSKGIACVSLDHGLPVMFGILTTESIEQAIERAGTKAGNKGFDTALAAIEMANLMTVMGEA.

Residues Phe23, 57-59, and 81-83 each bind 5-amino-6-(D-ribitylamino)uracil; these read AFE and AVI. Position 86 to 87 (86 to 87) interacts with (2S)-2-hydroxy-3-oxobutyl phosphate; the sequence is AT. His89 (proton donor) is an active-site residue. 5-amino-6-(D-ribitylamino)uracil is bound at residue Phe114. Arg128 contributes to the (2S)-2-hydroxy-3-oxobutyl phosphate binding site.

It belongs to the DMRL synthase family.

It carries out the reaction (2S)-2-hydroxy-3-oxobutyl phosphate + 5-amino-6-(D-ribitylamino)uracil = 6,7-dimethyl-8-(1-D-ribityl)lumazine + phosphate + 2 H2O + H(+). It functions in the pathway cofactor biosynthesis; riboflavin biosynthesis; riboflavin from 2-hydroxy-3-oxobutyl phosphate and 5-amino-6-(D-ribitylamino)uracil: step 1/2. In terms of biological role, catalyzes the formation of 6,7-dimethyl-8-ribityllumazine by condensation of 5-amino-6-(D-ribitylamino)uracil with 3,4-dihydroxy-2-butanone 4-phosphate. This is the penultimate step in the biosynthesis of riboflavin. The chain is 6,7-dimethyl-8-ribityllumazine synthase from Desulforapulum autotrophicum (strain ATCC 43914 / DSM 3382 / VKM B-1955 / HRM2) (Desulfobacterium autotrophicum).